The primary structure comprises 359 residues: Ribosomal RNA small subunit methyltransferase mra1 (359 aa).

Residues 1–10 are compositionally biased toward basic residues; it reads MPTYSKRKSR. Disordered regions lie at residues 1–62 and 98–118; these read MPTY…EDEE and VKSD…VKAR. Ser12 is modified (phosphoserine). The span at 18 to 39 shows a compositional bias: polar residues; that stretch reads KTNQPKFIKRSQSSETITSGET. Residue Thr33 is modified to Phosphothreonine. At Ser100 the chain carries Phosphoserine. S-adenosyl-L-methionine contacts are provided by residues Leu287, Gly314, 319 to 321, and 334 to 339; these read GPD and ISDYPL.

This sequence belongs to the class IV-like SAM-binding methyltransferase superfamily. RNA methyltransferase NEP1 family. In terms of assembly, homodimer.

It localises to the nucleus. The protein localises to the nucleolus. The catalysed reaction is a pseudouridine in rRNA + S-adenosyl-L-methionine = an N(1)-methylpseudouridine in rRNA + S-adenosyl-L-homocysteine + H(+). S-adenosyl-L-methionine-dependent pseudouridine N(1)-methyltransferase that methylates the pseudouridine corresponding to position 1189 (Psi1189) in S.cerevisiae 18S rRNA. Involved the biosynthesis of the hypermodified N1-methyl-N3-(3-amino-3-carboxypropyl) pseudouridine (m1acp3-Psi) conserved in eukaryotic 18S rRNA. Also has an essential role in 40S ribosomal subunit biogenesis independent on its methyltransferase activity, facilitating the incorporation of ribosomal protein S19 during the formation of pre-ribosomes. Essential for cell growth. It also has a key role in promoting the mating function. This Schizosaccharomyces pombe (strain 972 / ATCC 24843) (Fission yeast) protein is Ribosomal RNA small subunit methyltransferase mra1.